The sequence spans 162 residues: Shikimate kinase (162 aa).

Position 10 to 15 (10 to 15) interacts with ATP; that stretch reads GAGKST. Ser14 serves as a coordination point for Mg(2+). Substrate is bound by residues Asp28, Arg52, and Gly73. Arg113 provides a ligand contact to ATP. Arg129 is a substrate binding site.

The protein belongs to the shikimate kinase family. In terms of assembly, monomer. Mg(2+) is required as a cofactor.

Its subcellular location is the cytoplasm. The catalysed reaction is shikimate + ATP = 3-phosphoshikimate + ADP + H(+). It functions in the pathway metabolic intermediate biosynthesis; chorismate biosynthesis; chorismate from D-erythrose 4-phosphate and phosphoenolpyruvate: step 5/7. Catalyzes the specific phosphorylation of the 3-hydroxyl group of shikimic acid using ATP as a cosubstrate. The chain is Shikimate kinase from Lactococcus lactis subsp. cremoris (strain SK11).